Reading from the N-terminus, the 266-residue chain is Trypsin 5G1 (266 aa).

Residues 1–18 (MTRIILILTATFFACALG) form the signal peptide. The propeptide at 19-39 (ASTGGSHPLRPWWNALRSSGR) is activation peptide. Positions 40-265 (IVGGFEVPVE…VRDWVKEVSG (226 aa)) constitute a Peptidase S1 domain. An intrachain disulfide couples C66 to C82. Residues H81 and D125 each act as charge relay system in the active site. Disulfide bonds link C190/C206 and C217/C241. The Charge relay system role is filled by S221.

It belongs to the peptidase S1 family. Midgut.

The protein resides in the secreted. The protein localises to the extracellular space. The enzyme catalyses Preferential cleavage: Arg-|-Xaa, Lys-|-Xaa.. Functionally, major function may be to aid in digestion of the blood meal. The polypeptide is Trypsin 5G1 (Aedes aegypti (Yellowfever mosquito)).